The primary structure comprises 237 residues: tRNA (guanine-N(7)-)-methyltransferase (237 aa).

Glutamate 67, glutamate 92, aspartate 119, and aspartate 141 together coordinate S-adenosyl-L-methionine. Aspartate 141 is a catalytic residue. Substrate contacts are provided by residues lysine 145, aspartate 177, and 214 to 217 (TRYE).

It belongs to the class I-like SAM-binding methyltransferase superfamily. TrmB family.

The catalysed reaction is guanosine(46) in tRNA + S-adenosyl-L-methionine = N(7)-methylguanosine(46) in tRNA + S-adenosyl-L-homocysteine. It functions in the pathway tRNA modification; N(7)-methylguanine-tRNA biosynthesis. Functionally, catalyzes the formation of N(7)-methylguanine at position 46 (m7G46) in tRNA. The chain is tRNA (guanine-N(7)-)-methyltransferase from Jannaschia sp. (strain CCS1).